A 540-amino-acid polypeptide reads, in one-letter code: Tyrosinase (540 aa).

The N-terminal stretch at 1–19 (MKSLFLSAVLLQFFETCWS) is a signal peptide. The Lumenal, melanosome portion of the chain corresponds to 20-480 (QFPRPCANSE…LQQAQQIWQW (461 aa)). A glycan (N-linked (GlcNAc...) asparagine) is linked at asparagine 87. Cu cation-binding residues include histidine 182, histidine 205, and histidine 214. N-linked (GlcNAc...) asparagine glycans are attached at residues asparagine 233, asparagine 293, and asparagine 340. Residues histidine 366 and histidine 370 each contribute to the Cu cation site. An N-linked (GlcNAc...) asparagine glycan is attached at asparagine 374. Residue histidine 393 participates in Cu cation binding. A helical transmembrane segment spans residues 481–501 (LLGAGILGALIATIVAAVIVF). The Cytoplasmic segment spans residues 502 to 540 (ARRKRRRNQKRKRAPSFGERQPLLQSSSEEGSSSYQTTL). The disordered stretch occupies residues 511 to 540 (KRKRAPSFGERQPLLQSSSEEGSSSYQTTL). The segment covering 527 to 540 (SSSEEGSSSYQTTL) has biased composition (low complexity).

This sequence belongs to the tyrosinase family. Cu(2+) is required as a cofactor.

Its subcellular location is the melanosome membrane. The catalysed reaction is 2 L-dopa + O2 = 2 L-dopaquinone + 2 H2O. It carries out the reaction L-tyrosine + O2 = L-dopaquinone + H2O. This is a copper-containing oxidase that functions in the formation of pigments such as melanins and other polyphenolic compounds. The protein is Tyrosinase (tyr) of Oryzias latipes (Japanese rice fish).